A 208-amino-acid chain; its full sequence is Imidazole glycerol phosphate synthase subunit HisH (208 aa).

A Glutamine amidotransferase type-1 domain is found at 1–206 (MIVIIDYDTG…KEVTYSCKSS (206 aa)). The Nucleophile role is filled by C79. Residues H181 and E183 contribute to the active site.

Heterodimer of HisH and HisF.

Its subcellular location is the cytoplasm. The catalysed reaction is 5-[(5-phospho-1-deoxy-D-ribulos-1-ylimino)methylamino]-1-(5-phospho-beta-D-ribosyl)imidazole-4-carboxamide + L-glutamine = D-erythro-1-(imidazol-4-yl)glycerol 3-phosphate + 5-amino-1-(5-phospho-beta-D-ribosyl)imidazole-4-carboxamide + L-glutamate + H(+). It catalyses the reaction L-glutamine + H2O = L-glutamate + NH4(+). The protein operates within amino-acid biosynthesis; L-histidine biosynthesis; L-histidine from 5-phospho-alpha-D-ribose 1-diphosphate: step 5/9. Functionally, IGPS catalyzes the conversion of PRFAR and glutamine to IGP, AICAR and glutamate. The HisH subunit catalyzes the hydrolysis of glutamine to glutamate and ammonia as part of the synthesis of IGP and AICAR. The resulting ammonia molecule is channeled to the active site of HisF. This is Imidazole glycerol phosphate synthase subunit HisH from Listeria monocytogenes serovar 1/2a (strain ATCC BAA-679 / EGD-e).